The primary structure comprises 150 residues: Large ribosomal subunit protein bL9 (150 aa).

Belongs to the bacterial ribosomal protein bL9 family.

Functionally, binds to the 23S rRNA. The chain is Large ribosomal subunit protein bL9 from Corynebacterium diphtheriae (strain ATCC 700971 / NCTC 13129 / Biotype gravis).